Consider the following 400-residue polypeptide: Tyrosine-specific transport system 1 (400 aa).

Helical transmembrane passes span 5–25 (VGSTLLVAGTMIGAGMLAMPL), 34–54 (FTLVLLLGLWALLTFSALLFV), 80–100 (IIATAVLIIFLYALIAAYISG), 117–137 (VSVLLFTVIFGSFIVIGTHSV), 143–163 (VLFFVMLAAFAVVLSLMLPEI), 176–196 (ALIISASPVFFTAFGFHGSIP), 211–231 (FSILVGSAITLCAYILWQLST), 250–270 (LNGLVKATFAITGSNVIASAV), 273–293 (FSTLALITSFLGVGLGLLECI), 313–333 (LTFIPPLVFALFYPEGFILAL), 335–355 (YAGQMFAFYAVVLPVSLVWKA), and 370–390 (NLTLIIVLVLGVLITSIPFAI).

It belongs to the amino acid/polyamine transporter 2 family. Mtr/TnaB/TyrP permease subfamily.

Its subcellular location is the cell inner membrane. It carries out the reaction L-tyrosine(in) + H(+)(in) = L-tyrosine(out) + H(+)(out). Functionally, transports tyrosine across the cytoplasmic membrane. The transport system is energized by the proton motive force. This Haemophilus influenzae (strain ATCC 51907 / DSM 11121 / KW20 / Rd) protein is Tyrosine-specific transport system 1 (tyrP-A).